The primary structure comprises 507 residues: Glycerol kinase (507 aa).

T14 lines the ADP pocket. Positions 14, 15, and 16 each coordinate ATP. T14 contributes to the sn-glycerol 3-phosphate binding site. R18 is an ADP binding site. Sn-glycerol 3-phosphate contacts are provided by R84, E85, Y137, and D247. Residues R84, E85, Y137, D247, and Q248 each contribute to the glycerol site. ADP-binding residues include T269 and G312. ATP contacts are provided by T269, G312, Q316, and G413. ADP is bound by residues G413 and N417.

Belongs to the FGGY kinase family.

The enzyme catalyses glycerol + ATP = sn-glycerol 3-phosphate + ADP + H(+). Its pathway is polyol metabolism; glycerol degradation via glycerol kinase pathway; sn-glycerol 3-phosphate from glycerol: step 1/1. Inhibited by fructose 1,6-bisphosphate (FBP). Key enzyme in the regulation of glycerol uptake and metabolism. Catalyzes the phosphorylation of glycerol to yield sn-glycerol 3-phosphate. The polypeptide is Glycerol kinase (Psychromonas ingrahamii (strain DSM 17664 / CCUG 51855 / 37)).